A 566-amino-acid chain; its full sequence is Protein pacG (566 aa).

Residues 79–326 (TSFDPPPPAE…RSPRNFQSRK (248 aa)) constitute a DNA-binding region (NDT80). Disordered regions lie at residues 314-422 (VRGR…EAHR) and 448-470 (DSRP…DSGR). Positions 333-349 (SAAASRKNAQAAAASNN) are enriched in low complexity. Composition is skewed to polar residues over residues 365-391 (VKSS…ATNS), 403-413 (HSSVYSQSSPE), and 452-466 (HTSF…SLSV).

It localises to the nucleus. It is found in the cytoplasm. Transcription factor that acts as a positive regulator of nonrepressible acid phosphatase activity. Is a major regulator of responses to nitrogen and carbon starvation and is essential for the expression of genes involved in vegetative incompatibility (like pin-c, het-6, and tol). Vegetative incompatibility is a non-self-recognition system ubiquitous in filamentous fungi which results in programmed cell death. The protein is Protein pacG (pacG) of Emericella nidulans (strain FGSC A4 / ATCC 38163 / CBS 112.46 / NRRL 194 / M139) (Aspergillus nidulans).